The sequence spans 506 residues: Putative amidase (506 aa).

Residues Lys121 and Ser196 each act as charge relay system in the active site. The active-site Acyl-ester intermediate is the Ser220.

The protein belongs to the amidase family.

The enzyme catalyses a monocarboxylic acid amide + H2O = a monocarboxylate + NH4(+). The protein is Putative amidase of Synechocystis sp. (strain ATCC 27184 / PCC 6803 / Kazusa).